Here is a 405-residue protein sequence, read N- to C-terminus: Acetate kinase (405 aa).

Residue Asn-7 coordinates Mg(2+). Lys-14 is a binding site for ATP. Arg-92 lines the substrate pocket. The Proton donor/acceptor role is filled by Asp-149. ATP-binding positions include 209-213 (HLGNG) and 284-286 (DMR). Mg(2+) is bound at residue Glu-389.

Belongs to the acetokinase family. Homodimer. Requires Mg(2+) as cofactor. It depends on Mn(2+) as a cofactor.

The protein localises to the cytoplasm. It catalyses the reaction acetate + ATP = acetyl phosphate + ADP. The protein operates within metabolic intermediate biosynthesis; acetyl-CoA biosynthesis; acetyl-CoA from acetate: step 1/2. Catalyzes the formation of acetyl phosphate from acetate and ATP. Can also catalyze the reverse reaction. The sequence is that of Acetate kinase from Borreliella burgdorferi (strain ZS7) (Borrelia burgdorferi).